The sequence spans 407 residues: Nuclear hormone receptor family member nhr-86 (407 aa).

A DNA-binding region (nuclear receptor) is located at residues 21-96; sequence KSTCSICRED…VGMNPAGVQQ (76 aa). 2 NR C4-type zinc fingers span residues 24 to 44 and 60 to 79; these read CSIC…CRAC and CRGN…CRSC. In terms of domain architecture, NR LBD spans 130–405; sequence AQSALVEDLH…KDFYDLVNGK (276 aa). An AF-2 region spans residues 394-405; it reads PPKDFYDLVNGK.

The protein belongs to the nuclear hormone receptor family. In terms of tissue distribution, expressed in intestinal epithelial cells, excretory gland cells and in several head neurons.

It localises to the nucleus. Its function is as follows. Nuclear receptor which acts as a transcription activator. Binds small molecule ligands, such as phenazine 1-carboxamide (PCN), a pathogen-derived metabolite, leading to modulation of innate immune responses against virulent pathogens. On exposure to exogenous PCN, P.aeruginosa and other xenobiotic immunostimulant such as R24, activates immune response genes, including irg-4, irg-5, mul-1, drd-50, cyp-35C1 and ugt-30, probably via direct interaction with their promoters, and independent of the p38 MAPK pmk-1 pathway. Exhibits higher affinity to R24 than PCN and thus induces stronger immune response. Binds its own promoter thereby autoregulating its expression in the head hypodermis and the pharynx. Possibly plays a role in lipid storage or catabolism. The sequence is that of Nuclear hormone receptor family member nhr-86 (nhr-86) from Caenorhabditis elegans.